The following is a 254-amino-acid chain: Acetylglutamate kinase (254 aa).

Residues 40-41 (GG), Arg62, and Asn154 contribute to the substrate site. ATP is bound by residues 177 to 182 (DVSGIL) and 205 to 207 (IIT).

It belongs to the acetylglutamate kinase family. ArgB subfamily. Homodimer.

The protein resides in the cytoplasm. The catalysed reaction is N-acetyl-L-glutamate + ATP = N-acetyl-L-glutamyl 5-phosphate + ADP. It participates in amino-acid biosynthesis; L-arginine biosynthesis; N(2)-acetyl-L-ornithine from L-glutamate: step 2/4. Functionally, catalyzes the ATP-dependent phosphorylation of N-acetyl-L-glutamate. The polypeptide is Acetylglutamate kinase (Yersinia enterocolitica serotype O:8 / biotype 1B (strain NCTC 13174 / 8081)).